A 445-amino-acid chain; its full sequence is Glutamate-1-semialdehyde 2,1-aminomutase (445 aa).

Position 264 is an N6-(pyridoxal phosphate)lysine (Lys264).

This sequence belongs to the class-III pyridoxal-phosphate-dependent aminotransferase family. HemL subfamily. Pyridoxal 5'-phosphate serves as cofactor.

The protein localises to the cytoplasm. It carries out the reaction (S)-4-amino-5-oxopentanoate = 5-aminolevulinate. Its pathway is porphyrin-containing compound metabolism; protoporphyrin-IX biosynthesis; 5-aminolevulinate from L-glutamyl-tRNA(Glu): step 2/2. The protein is Glutamate-1-semialdehyde 2,1-aminomutase of Halobacterium salinarum (strain ATCC 29341 / DSM 671 / R1).